Consider the following 71-residue polypeptide: Heat-stable enterotoxin II (71 aa).

Residues 1-23 (MKKNIAFLLASMFVFSIATNAYA) form the signal peptide. 2 disulfide bridges follow: C33–C71 and C44–C59.

The protein resides in the secreted. Functionally, toxin which activates the particulate form of guanylate cyclase and increases cyclic GMP levels within the host intestinal epithelial cells. The protein is Heat-stable enterotoxin II (stiI) of Escherichia coli.